The sequence spans 554 residues: Carboxypeptidase Y homolog A (554 aa).

An N-terminal signal peptide occupies residues 1–17 (MRISASTVLLGAASAAS). A propeptide spanning residues 18-137 (AASFQNQAQH…QLDNFNLRVK (120 aa)) is cleaved from the precursor. Intrachain disulfides connect Cys191–Cys431, Cys325–Cys339, Cys349–Cys372, Cys356–Cys365, and Cys394–Cys401. Asn222 carries an N-linked (GlcNAc...) asparagine glycan. The active site involves Ser278. Residue Asp470 is part of the active site. The N-linked (GlcNAc...) asparagine glycan is linked to Asn518. The active site involves His529.

Belongs to the peptidase S10 family.

The protein localises to the vacuole. It carries out the reaction Release of a C-terminal amino acid with broad specificity.. In terms of biological role, vacuolar carboxypeptidase involved in degradation of small peptides. Digests preferentially peptides containing an aliphatic or hydrophobic residue in P1' position, as well as methionine, leucine or phenylalanine in P1 position of ester substrate. This Neurospora crassa (strain ATCC 24698 / 74-OR23-1A / CBS 708.71 / DSM 1257 / FGSC 987) protein is Carboxypeptidase Y homolog A (cpyA).